We begin with the raw amino-acid sequence, 368 residues long: Transcription factor TGA1 (368 aa).

Polar residues predominate over residues 53–65; the sequence is LDNNVSEDTSHGT. Positions 53–83 are disordered; it reads LDNNVSEDTSHGTAGTPHMFDQEASTSRHPD. The bZIP domain occupies 82 to 145; the sequence is PDKIQRRLAQ…NGIDTNSLGF (64 aa). Coiled-coil stretches lie at residues 83–131 and 261–281; these read DKIQ…RQQG and NLKQSCQQAEDALTQGMEKLQ. The interval 84 to 104 is basic motif; that stretch reads KIQRRLAQNREAARKSRLRKK. A leucine-zipper region spans residues 110–124; that stretch reads LETSRLKLIQLEQEL. In terms of domain architecture, DOG1 spans 153-363; it reads IAAFEMEYGH…RALSSSWATR (211 aa). Cysteine 260 and cysteine 266 are disulfide-bonded.

Belongs to the bZIP family. Binds DNA as a dimer. The reduced form interacts with NPR1. Predominantly expressed in roots.

The protein resides in the nucleus. In terms of biological role, transcriptional activator that binds specifically to the DNA sequence 5'-TGACG-3'. Recognizes ocs elements like the as-1 motif of the cauliflower mosaic virus 35S promoter. Binding to the as-1-like cis elements mediate auxin- and salicylic acid-inducible transcription. May be involved in the induction of the systemic acquired resistance (SAR) via its interaction with NPR1. Could also bind to the Hex-motif (5'-TGACGTGG-3') another cis-acting element found in plant histone promoters. This is Transcription factor TGA1 (TGA1) from Arabidopsis thaliana (Mouse-ear cress).